The following is a 389-amino-acid chain: Succinate--CoA ligase [ADP-forming] subunit beta (389 aa).

The ATP-grasp domain occupies 9-244; that stretch reads KELLRQFNVP…IDEEDAAEIE (236 aa). ATP contacts are provided by residues Lys-46, 53–55, Glu-99, Ala-102, and Glu-107; that span reads GRG. The Mg(2+) site is built by Asn-199 and Asp-213. Substrate is bound by residues Asn-264 and 321-323; that span reads GIM.

The protein belongs to the succinate/malate CoA ligase beta subunit family. Heterotetramer of two alpha and two beta subunits. It depends on Mg(2+) as a cofactor.

The catalysed reaction is succinate + ATP + CoA = succinyl-CoA + ADP + phosphate. The enzyme catalyses GTP + succinate + CoA = succinyl-CoA + GDP + phosphate. It participates in carbohydrate metabolism; tricarboxylic acid cycle; succinate from succinyl-CoA (ligase route): step 1/1. Its function is as follows. Succinyl-CoA synthetase functions in the citric acid cycle (TCA), coupling the hydrolysis of succinyl-CoA to the synthesis of either ATP or GTP and thus represents the only step of substrate-level phosphorylation in the TCA. The beta subunit provides nucleotide specificity of the enzyme and binds the substrate succinate, while the binding sites for coenzyme A and phosphate are found in the alpha subunit. This is Succinate--CoA ligase [ADP-forming] subunit beta from Polynucleobacter necessarius subsp. necessarius (strain STIR1).